The following is a 275-amino-acid chain: Large ribosomal subunit protein uL2 (275 aa).

Disordered regions lie at residues 28–59 and 224–275; these read KPFA…GGHK and AMNP…RHKR. Over residues 35–49 the composition is skewed to polar residues; that stretch reads DSQSTTAGRNNNGHI. Positions 50–59 are enriched in basic residues; that stretch reads TTRHKGGGHK.

The protein belongs to the universal ribosomal protein uL2 family. As to quaternary structure, part of the 50S ribosomal subunit. Forms a bridge to the 30S subunit in the 70S ribosome.

One of the primary rRNA binding proteins. Required for association of the 30S and 50S subunits to form the 70S ribosome, for tRNA binding and peptide bond formation. It has been suggested to have peptidyltransferase activity; this is somewhat controversial. Makes several contacts with the 16S rRNA in the 70S ribosome. The polypeptide is Large ribosomal subunit protein uL2 (Paraburkholderia xenovorans (strain LB400)).